A 66-amino-acid chain; its full sequence is Movement protein TGBp3 (66 aa).

Residues 1–2 (MD) lie on the Lumenal side of the membrane. A helical membrane pass occupies residues 3–23 (FTTLIIIGVYLLVFIVYFAKI). The Cytoplasmic segment spans residues 24 to 66 (NTSVCTISISGASIEISGCDNPTLFEILPKLRPFNHGLSLPSN).

This sequence belongs to the Tymovirales TGBp3 protein family.

The protein resides in the host endoplasmic reticulum membrane. Functionally, plays a role in viral cell-to-cell propagation, by facilitating genome transport to neighboring plant cells through plasmosdesmata. May induce the formation of granular vesicles derived from the Endoplasmic reticulum, which align on actin filaments. The protein is Movement protein TGBp3 of Trifolium (WCMV).